The sequence spans 266 residues: Cell division protein FtsQ (266 aa).

The Cytoplasmic portion of the chain corresponds to 1-31; sequence MRQKTSSNKKKQKNTNNISLRRKLGLMYKKA. Residues 32–52 form a helical membrane-spanning segment; sequence ILGLKIVLMIFVCLFVFTKYF. The Periplasmic portion of the chain corresponds to 53-266; the sequence is TSIKTYLITN…DRNKYYIQKY (214 aa). Positions 72–140 constitute a POTRA domain; sequence FRLENVIIEG…NTVYIKLFER (69 aa).

This sequence belongs to the FtsQ/DivIB family. FtsQ subfamily.

It is found in the cell inner membrane. Its function is as follows. Essential cell division protein. The protein is Cell division protein FtsQ of Rickettsia typhi (strain ATCC VR-144 / Wilmington).